Reading from the N-terminus, the 746-residue chain is Probable ubiquitin carboxyl-terminal hydrolase MINDY-4 (746 aa).

Disordered stretches follow at residues 123-179 (DDET…SEGE), 198-254 (MALG…IKGE), and 319-342 (GKGA…FSNM). 2 stretches are compositionally biased toward polar residues: residues 141–152 (YRSQNDLQFNKS) and 165–174 (TEAGVTSTGV). Catalysis depends on cysteine 448, which acts as the Nucleophile. Residue histidine 666 is the Proton acceptor of the active site.

It belongs to the MINDY deubiquitinase family. FAM188 subfamily.

It carries out the reaction Thiol-dependent hydrolysis of ester, thioester, amide, peptide and isopeptide bonds formed by the C-terminal Gly of ubiquitin (a 76-residue protein attached to proteins as an intracellular targeting signal).. Probable hydrolase that can remove 'Lys-48'-linked conjugated ubiquitin from proteins. The sequence is that of Probable ubiquitin carboxyl-terminal hydrolase MINDY-4 (mindy4) from Xenopus tropicalis (Western clawed frog).